The primary structure comprises 234 residues: Ubiquinone biosynthesis O-methyltransferase (234 aa).

S-adenosyl-L-methionine-binding residues include Arg-39, Gly-59, Asp-80, and Met-124.

It belongs to the methyltransferase superfamily. UbiG/COQ3 family.

The catalysed reaction is a 3-demethylubiquinol + S-adenosyl-L-methionine = a ubiquinol + S-adenosyl-L-homocysteine + H(+). The enzyme catalyses a 3-(all-trans-polyprenyl)benzene-1,2-diol + S-adenosyl-L-methionine = a 2-methoxy-6-(all-trans-polyprenyl)phenol + S-adenosyl-L-homocysteine + H(+). Its pathway is cofactor biosynthesis; ubiquinone biosynthesis. Its function is as follows. O-methyltransferase that catalyzes the 2 O-methylation steps in the ubiquinone biosynthetic pathway. This Aliivibrio fischeri (strain MJ11) (Vibrio fischeri) protein is Ubiquinone biosynthesis O-methyltransferase.